We begin with the raw amino-acid sequence, 61 residues long: MAKKALVNKAARKPKFTVRGYTRCSKCGRPRAVFRKFGLCRICLREMAHAGELPGVQKSSW.

The Zn(2+) site is built by cysteine 24, cysteine 27, cysteine 40, and cysteine 43.

The protein belongs to the universal ribosomal protein uS14 family. Zinc-binding uS14 subfamily. As to quaternary structure, part of the 30S ribosomal subunit. Contacts proteins S3 and S10. Zn(2+) is required as a cofactor.

Functionally, binds 16S rRNA, required for the assembly of 30S particles and may also be responsible for determining the conformation of the 16S rRNA at the A site. The protein is Small ribosomal subunit protein uS14 of Mycobacterium leprae (strain Br4923).